Here is a 432-residue protein sequence, read N- to C-terminus: Pachytene checkpoint protein 2 homolog (432 aa).

Residue Met1 is modified to N-acetylmethionine. 179-186 (GPPGTGKT) serves as a coordination point for ATP.

This sequence belongs to the AAA ATPase family. PCH2 subfamily. Specifically interacts with the ligand binding domain of the thyroid receptor (TR). This interaction does not require the presence of thyroid hormone for its interaction. Interacts with proteasome subunit PSMA8; to participate in meiosis progression during spermatogenesis.

Functionally, plays a key role in chromosome recombination and chromosome structure development during meiosis. Required at early steps in meiotic recombination that leads to non-crossovers pathways. Also needed for efficient completion of homologous synapsis by influencing crossover distribution along the chromosomes affecting both crossovers and non-crossovers pathways. Also required for development of higher-order chromosome structures and is needed for synaptonemal-complex formation. In males, required for efficient synapsis of the sex chromosomes and for sex body formation. Promotes early steps of the DNA double-strand breaks (DSBs) repair process upstream of the assembly of RAD51 complexes. Required for depletion of HORMAD1 and HORMAD2 from synapsed chromosomes. Plays a role in mitotic spindle assembly checkpoint (SAC) activation. The polypeptide is Pachytene checkpoint protein 2 homolog (Trip13) (Rattus norvegicus (Rat)).